A 177-amino-acid chain; its full sequence is MSRIAKYPVELPKGVEASIQPDQITVKGPLGTLVQSLTGDVNVAQEDGKLTFVVANDSRHANAMSGTLRALVANMVTGVSKGFERKLNLVGVGYRAQIQGDAVKLQLGFSHDVVHQLPAGVKAECPTQTEIVIKGPNKQVVGQVAAEIRKYREPEPYKGKGVRYADERVVIKETKKK.

Belongs to the universal ribosomal protein uL6 family. In terms of assembly, part of the 50S ribosomal subunit.

This protein binds to the 23S rRNA, and is important in its secondary structure. It is located near the subunit interface in the base of the L7/L12 stalk, and near the tRNA binding site of the peptidyltransferase center. This is Large ribosomal subunit protein uL6 from Bordetella bronchiseptica (strain ATCC BAA-588 / NCTC 13252 / RB50) (Alcaligenes bronchisepticus).